The following is a 164-amino-acid chain: S-ribosylhomocysteine lyase (164 aa).

Positions 54, 58, and 128 each coordinate Fe cation.

It belongs to the LuxS family. Homodimer. Requires Fe cation as cofactor.

It carries out the reaction S-(5-deoxy-D-ribos-5-yl)-L-homocysteine = (S)-4,5-dihydroxypentane-2,3-dione + L-homocysteine. Functionally, involved in the synthesis of autoinducer 2 (AI-2) which is secreted by bacteria and is used to communicate both the cell density and the metabolic potential of the environment. The regulation of gene expression in response to changes in cell density is called quorum sensing. Catalyzes the transformation of S-ribosylhomocysteine (RHC) to homocysteine (HC) and 4,5-dihydroxy-2,3-pentadione (DPD). In Campylobacter jejuni subsp. jejuni serotype O:23/36 (strain 81-176), this protein is S-ribosylhomocysteine lyase.